Reading from the N-terminus, the 267-residue chain is Nanos homolog 1 (267 aa).

An essential for its translational repressor activity region spans residues 40–56 (FSSWNDYLGLATLITRA). A disordered region spans residues 57–94 (SDRGSPHEGPGPTAAGPTMGPPEDDEDDDGEEPEAGGR). Acidic residues predominate over residues 78–90 (PEDDEDDDGEEPE). Residues 188–242 (VCVFCRNNKEAVALYTTHILKGPDGRVLCPVLRRYTCPLCGASGDNAHTIKYCPL) form a Nanos-type zinc finger. Zn(2+)-binding residues include Cys-189, Cys-192, His-205, Cys-216, Cys-224, Cys-227, His-235, and Cys-240. Short sequence motifs (C2HC) lie at residues 189-216 (CVFCRNNKEAVALYTTHILKGPDGRVLC) and 224-240 (CPLCGASGDNAHTIKYC). The segment at 243–267 (SKVPPPTVRPPPRSNRDSLPSKKLR) is disordered. Residues 244 to 255 (KVPPPTVRPPPR) show a composition bias toward pro residues. Positions 256–267 (SNRDSLPSKKLR) are enriched in basic and acidic residues.

It belongs to the nanos family. Interacts with PUM2, SNAPIN and CTNNB1. Interacts (via N-terminal region) with CTNND1. Interacts with DDX20 (via N-terminal region). Expressed in the oocyte. Transiently expressed in eight-cell embryos. At 12.5 dpc, it is re-expressed in the central nervous system and the expression continues in the adult brain, in which the hippocampal formation is the predominant region. Expressed in the seminiferous tubules of mature testis, but not in the primordial germ cells.

The protein resides in the cytoplasm. The protein localises to the perinuclear region. Functionally, may act as a translational repressor which regulates translation of specific mRNAs by forming a complex with PUM2 that associates with the 3'-UTR of mRNA targets. Capable of interfering with the proadhesive and anti-invasive functions of E-cadherin. Up-regulates the production of MMP14 to promote tumor cell invasion. Not essential for normal development. This chain is Nanos homolog 1 (Nanos1), found in Mus musculus (Mouse).